The primary structure comprises 252 residues: Probable transcriptional regulatory protein CE1776 (252 aa).

Residues 1–22 are disordered; that stretch reads MAGHSKWATTKHKKAANDAKRG.

The protein belongs to the TACO1 family.

Its subcellular location is the cytoplasm. The chain is Probable transcriptional regulatory protein CE1776 from Corynebacterium efficiens (strain DSM 44549 / YS-314 / AJ 12310 / JCM 11189 / NBRC 100395).